Consider the following 149-residue polypeptide: Arginine repressor (149 aa).

Belongs to the ArgR family.

The protein resides in the cytoplasm. The protein operates within amino-acid biosynthesis; L-arginine biosynthesis [regulation]. Functionally, regulates arginine biosynthesis genes. The polypeptide is Arginine repressor (Geobacillus sp. (strain WCH70)).